The sequence spans 55 residues: Large ribosomal subunit protein bL33A (55 aa).

It belongs to the bacterial ribosomal protein bL33 family.

This Mycobacterium sp. (strain KMS) protein is Large ribosomal subunit protein bL33A.